Reading from the N-terminus, the 134-residue chain is Ribosome-binding factor A (134 aa).

This sequence belongs to the RbfA family. As to quaternary structure, monomer. Binds 30S ribosomal subunits, but not 50S ribosomal subunits or 70S ribosomes.

Its subcellular location is the cytoplasm. Its function is as follows. One of several proteins that assist in the late maturation steps of the functional core of the 30S ribosomal subunit. Associates with free 30S ribosomal subunits (but not with 30S subunits that are part of 70S ribosomes or polysomes). Required for efficient processing of 16S rRNA. May interact with the 5'-terminal helix region of 16S rRNA. The chain is Ribosome-binding factor A from Parasynechococcus marenigrum (strain WH8102).